The sequence spans 599 residues: MTDLTTHDLAQPGWQTRDHLDDPVVGELCNRFGPDAFTVQATRTGIPVVWVKREQLLDVVAFLKKQPKPYVMLFDLHGMDERLRTHREGLPAADYSVFYHIISIERNRDIMLKVALAESDLHVPTVTKLFPNANWYERETWEMFGITFNGHPHLTRIMMPHTWEGHPLRKDYPARATEFDPFVLTKQKEDLEMESLTFKPEEWGMKRGTENEDFMFLNLGPNHPSSHGAFRIILQLDGEEIVDCVPDVGYHHRGAEKMGERQSWHSYIPYTDRIEYLGGCVNEMPYVLAVEKLAGIEVPDRVKTIRVMLSELFRINSHLLYISTYIQDVGAMTPVFFAFTDRQKIYDLVEAITGFRMHPAWFRIGGVAHDLPRGWERLLREFLDWMPSRLDTYVKAALQNTILKGRTQGVAAYNAKEALDWGVTGAGLRATGIGFDVRKWRPYSGYENFDFEVPVGDGISDCYSRVMLKVEELRQSLRILDQCLKNMPEGPFKADHPLTTPPPKERTLQHIDTLINHFLQVSWGPVMPANESFQMVEATKGINSYYLTSDGGTMSYRTRIRTPSYAHLQQIPSVIRGCLVSDLIVYLGSIDFVMSDVDR.

Positions 1–189 are NADH dehydrogenase I subunit C; it reads MTDLTTHDLA…DPFVLTKQKE (189 aa). The segment at 213 to 599 is NADH dehydrogenase I subunit D; that stretch reads DFMFLNLGPN…IDFVMSDVDR (387 aa).

This sequence in the N-terminal section; belongs to the complex I 30 kDa subunit family. The protein in the C-terminal section; belongs to the complex I 49 kDa subunit family. NDH-1 is composed of 13 different subunits. Subunits NuoB, CD, E, F, and G constitute the peripheral sector of the complex.

The protein localises to the cell inner membrane. The enzyme catalyses a quinone + NADH + 5 H(+)(in) = a quinol + NAD(+) + 4 H(+)(out). Its function is as follows. NDH-1 shuttles electrons from NADH, via FMN and iron-sulfur (Fe-S) centers, to quinones in the respiratory chain. The immediate electron acceptor for the enzyme in this species is believed to be ubiquinone. Couples the redox reaction to proton translocation (for every two electrons transferred, four hydrogen ions are translocated across the cytoplasmic membrane), and thus conserves the redox energy in a proton gradient. In Pectobacterium carotovorum subsp. carotovorum (strain PC1), this protein is NADH-quinone oxidoreductase subunit C/D.